The sequence spans 207 residues: MTSRKKVLLKVIILGDSGVGKTSLMNQYVNKKFSNQYKATIGADFLTKEVMVDDRLVTMQIWDTAGQERFQSLGVAFYRGADCCVLVFDVTAPNTFKTLDSWRDEFLIQASPRDPENFPFVVLGNKIDLENRQVATKRAQAWCYSKNNIPYFETSAKEAINVEQAFQTIVRNALKQETEVELYNEFPEPIKLDKNDRTKPSAEGCSC.

Residue Thr-2 is modified to N-acetylthreonine. Residues Ser-17, Gly-18, Val-19, Gly-20, Lys-21, Thr-22, Ser-23, Ser-34, Asn-35, Tyr-37, and Thr-40 each contribute to the GTP site. Thr-22 is a binding site for Mg(2+). Residues 28–41 carry the Switch 1 motif; the sequence is YVNKKFSNQYKATI. Thr-40 and Asp-63 together coordinate Mg(2+). Gly-66 contributes to the GTP binding site. The Switch 2 signature appears at 67–82; it reads QERFQSLGVAFYRGAD. Residue Ser-72 is modified to Phosphoserine. Asn-125, Lys-126, Asp-128, Ala-156, and Lys-157 together coordinate GTP. Residues Lys-191 and Lys-194 each participate in a glycyl lysine isopeptide (Lys-Gly) (interchain with G-Cter in ubiquitin) cross-link. Residues Cys-205 and Cys-207 are each lipidated (S-geranylgeranyl cysteine). Cys-207 bears the Cysteine methyl ester mark.

The protein belongs to the small GTPase superfamily. Rab family. As to quaternary structure, interacts with NTRK1/TRKA. Interacts with RILP. Interacts with PSMA7. Interacts with RNF115. Interacts with FYCO1. Interacts with the PIK3C3/VPS34-PIK3R4 complex. The GTP-bound form interacts with OSBPL1A. The GTP-bound form interacts with RAC1. Interacts with CLN3. Interacts with CHM, the substrate-binding subunit of the Rab geranylgeranyltransferase complex. Interacts with C9orf72. Does not interact with HPS4 and the BLOC-3 complex (heterodimer of HPS1 and HPS4). Interacts with CLN5. Interacts with PLEKHM1 (via N- and C-terminus). Interacts with PRPH; the interaction is direct. Interacts with VPS13A. The GDP-bound form interacts with RIMOC1. Interacts with the MON1A-CCZ1B complex and this interaction is enhanced in the presence of RIMOC1. Interacts with VPS39 and VPS41. Forms a ternary complex with LAMP2 and RUFY4; the interaction with LAMP2 is mediated by RUFY4 (via RUN and coiled coil domains). Mg(2+) serves as cofactor. Post-translationally, deubiquitination at Lys-191 and Lys-194 by USP32. In terms of processing, phosphorylated at Ser-72 by LRRK1; phosphorylation is dependent on protein kinase C (PKC) activation of LRRK1. Prenylated. Prenylation is required for association with cellular membranes.

The protein resides in the cytoplasmic vesicle. Its subcellular location is the phagosome membrane. The protein localises to the late endosome membrane. It is found in the lysosome membrane. It localises to the melanosome membrane. The protein resides in the autophagosome membrane. Its subcellular location is the lipid droplet. The protein localises to the endosome membrane. It is found in the mitochondrion membrane. It carries out the reaction GTP + H2O = GDP + phosphate + H(+). Its activity is regulated as follows. Regulated by guanine nucleotide exchange factors (GEFs) which promote the exchange of bound GDP for free GTP. Regulated by GTPase activating proteins (GAPs) which increase the GTP hydrolysis activity. Inhibited by GDP dissociation inhibitors (GDIs). The small GTPases Rab are key regulators of intracellular membrane trafficking, from the formation of transport vesicles to their fusion with membranes. Rabs cycle between an inactive GDP-bound form and an active GTP-bound form that is able to recruit to membranes different sets of downstream effectors directly responsible for vesicle formation, movement, tethering and fusion. In its active state, RAB7A binds to a variety of effector proteins playing a key role in the regulation of endo-lysosomal trafficking. Governs early-to-late endosomal maturation, microtubule minus-end as well as plus-end directed endosomal migration and positioning, and endosome-lysosome transport through different protein-protein interaction cascades. Also plays a central role in growth-factor-mediated cell signaling, nutrient-transporter-mediated nutrient uptake, neurotrophin transport in the axons of neurons and lipid metabolism. Also involved in regulation of some specialized endosomal membrane trafficking, such as maturation of melanosomes, pathogen-induced phagosomes (or vacuoles) and autophagosomes. Plays a role in the maturation and acidification of phagosomes that engulf pathogens, such as S.aureus and Mycobacteria. Plays a role in the fusion of phagosomes with lysosomes. In concert with RAC1, plays a role in regulating the formation of RBs (ruffled borders) in osteoclasts. Controls the endosomal trafficking and neurite outgrowth signaling of NTRK1/TRKA. Regulates the endocytic trafficking of the EGF-EGFR complex by regulating its lysosomal degradation. Involved in the ADRB2-stimulated lipolysis through lipophagy, a cytosolic lipase-independent autophagic pathway. Required for the exosomal release of SDCBP, CD63 and syndecan. Required for vesicular trafficking and cell surface expression of ACE2. May play a role in PRPH neuronal intermediate filament assembly. This Bos taurus (Bovine) protein is Ras-related protein Rab-7a (RAB7A).